We begin with the raw amino-acid sequence, 118 residues long: Large ribosomal subunit protein uL18 (118 aa).

Belongs to the universal ribosomal protein uL18 family. As to quaternary structure, part of the 50S ribosomal subunit; part of the 5S rRNA/L5/L18/L25 subcomplex. Contacts the 5S and 23S rRNAs.

In terms of biological role, this is one of the proteins that bind and probably mediate the attachment of the 5S RNA into the large ribosomal subunit, where it forms part of the central protuberance. The sequence is that of Large ribosomal subunit protein uL18 from Brachyspira hyodysenteriae (strain ATCC 49526 / WA1).